Here is an 828-residue protein sequence, read N- to C-terminus: Phenylalanine--tRNA ligase beta subunit (828 aa).

The 119-residue stretch at 43 to 161 folds into the tRNA-binding domain; the sequence is LSKNTNLVVG…DQIALGSNAL (119 aa). Positions 203-230 are disordered; sequence KKKEKKTINYKTKNSKDQTNRKTTPKLN. The B5 domain maps to 436-519; sequence RTNPTISLDL…RFYGCHKLPP (84 aa). 3 residues coordinate Mg(2+): D497, D503, and D507. In terms of domain architecture, FDX-ACB spans 736–828; it reads PKFPTVIRDL…LIKHFRIEIR (93 aa).

This sequence belongs to the phenylalanyl-tRNA synthetase beta subunit family. Type 1 subfamily. In terms of assembly, tetramer of two alpha and two beta subunits. Mg(2+) is required as a cofactor.

It localises to the cytoplasm. The catalysed reaction is tRNA(Phe) + L-phenylalanine + ATP = L-phenylalanyl-tRNA(Phe) + AMP + diphosphate + H(+). This Aster yellows witches'-broom phytoplasma (strain AYWB) protein is Phenylalanine--tRNA ligase beta subunit.